A 1097-amino-acid chain; its full sequence is UPF0746 protein DDB_G0281095 (1097 aa).

Basic and acidic residues predominate over residues 1–11 (MVNNNKRKEIE). The disordered stretch occupies residues 1–24 (MVNNNKRKEIENQENDNDDDNDGL). Residues 12–22 (NQENDNDDDND) show a composition bias toward acidic residues. An SAP domain is found at 35 to 69 (YDSIRSKELQTIAKSLGLPNNGKKQEVYKRIEGYF). Residues 329–521 (FKEIREIHQQ…QLILELNEIQ (193 aa)) are a coiled coil.

Belongs to the UPF0746 family.

In Dictyostelium discoideum (Social amoeba), this protein is UPF0746 protein DDB_G0281095.